Consider the following 102-residue polypeptide: Glycoprotein 24A (102 aa).

It belongs to the csb family. In terms of processing, O-glycosylated.

Its subcellular location is the cell surface. Functionally, cell-cell adhesion during early development. The sequence is that of Glycoprotein 24A (csbA) from Dictyostelium discoideum (Social amoeba).